A 293-amino-acid chain; its full sequence is Fructose-bisphosphate aldolase (293 aa).

Serine 50 is a D-glyceraldehyde 3-phosphate binding site. The active-site Proton donor is the aspartate 85. Histidine 86, aspartate 106, glutamate 136, and histidine 178 together coordinate Zn(2+). Glycine 179 provides a ligand contact to dihydroxyacetone phosphate. Histidine 208 contributes to the Zn(2+) binding site. Dihydroxyacetone phosphate contacts are provided by residues 209-211 and 230-233; these read GGS and NVNT.

Belongs to the class II fructose-bisphosphate aldolase family. The cofactor is Zn(2+).

It carries out the reaction beta-D-fructose 1,6-bisphosphate = D-glyceraldehyde 3-phosphate + dihydroxyacetone phosphate. The protein operates within carbohydrate degradation; glycolysis; D-glyceraldehyde 3-phosphate and glycerone phosphate from D-glucose: step 4/4. Catalyzes the aldol condensation of dihydroxyacetone phosphate (DHAP or glycerone-phosphate) with glyceraldehyde 3-phosphate (G3P) to form fructose 1,6-bisphosphate (FBP) in gluconeogenesis and the reverse reaction in glycolysis. The protein is Fructose-bisphosphate aldolase (fba) of Streptococcus pneumoniae serotype 4 (strain ATCC BAA-334 / TIGR4).